A 461-amino-acid chain; its full sequence is Bifunctional protein HldE (461 aa).

The interval 1 to 312 is ribokinase; the sequence is MLEFLSQQKP…IRSFKSMSFE (312 aa). An ATP-binding site is contributed by 191-194; it reads NKKE. Asp259 is an active-site residue. The cytidylyltransferase stretch occupies residues 334-461; it reads FTNGCFDIVH…KIIEKIKDKK (128 aa).

This sequence in the N-terminal section; belongs to the carbohydrate kinase PfkB family. The protein in the C-terminal section; belongs to the cytidylyltransferase family. As to quaternary structure, homodimer.

The catalysed reaction is D-glycero-beta-D-manno-heptose 7-phosphate + ATP = D-glycero-beta-D-manno-heptose 1,7-bisphosphate + ADP + H(+). It carries out the reaction D-glycero-beta-D-manno-heptose 1-phosphate + ATP + H(+) = ADP-D-glycero-beta-D-manno-heptose + diphosphate. Its pathway is nucleotide-sugar biosynthesis; ADP-L-glycero-beta-D-manno-heptose biosynthesis; ADP-L-glycero-beta-D-manno-heptose from D-glycero-beta-D-manno-heptose 7-phosphate: step 1/4. It participates in nucleotide-sugar biosynthesis; ADP-L-glycero-beta-D-manno-heptose biosynthesis; ADP-L-glycero-beta-D-manno-heptose from D-glycero-beta-D-manno-heptose 7-phosphate: step 3/4. In terms of biological role, catalyzes the phosphorylation of D-glycero-D-manno-heptose 7-phosphate at the C-1 position to selectively form D-glycero-beta-D-manno-heptose-1,7-bisphosphate. Its function is as follows. Catalyzes the ADP transfer from ATP to D-glycero-beta-D-manno-heptose 1-phosphate, yielding ADP-D-glycero-beta-D-manno-heptose. This chain is Bifunctional protein HldE, found in Campylobacter jejuni (strain RM1221).